Here is a 214-residue protein sequence, read N- to C-terminus: Insulin-like growth factor 2 (214 aa).

The b stretch occupies residues 48–79; the sequence is EVASAETLCGGELVDALQFVCEDRGFYFSRPT. Intrachain disulfides connect Cys-56–Cys-97, Cys-68–Cys-110, and Cys-96–Cys-101. Positions 80–90 are c; the sequence is SRSNSRRSQNR. Positions 91–111 are a; it reads GIVEECCFRSCDLNLLEQYCA. The segment at 112–117 is d; it reads KPAKSE. The propeptide at 118 to 214 is e peptide; that stretch reads RDVSATSLQI…PPTDNYVSHN (97 aa).

It belongs to the insulin family.

The protein resides in the secreted. The insulin-like growth factors, isolated from plasma, are structurally and functionally related to insulin but have a much higher growth-promoting activity. Acts as a ligand for integrin which is required for IGF2 signaling. This Oncorhynchus mykiss (Rainbow trout) protein is Insulin-like growth factor 2.